The following is a 552-amino-acid chain: Low-affinity Fe(2+) transport protein (552 aa).

The Extracellular portion of the chain corresponds to Met1–Gln97. Residue Lys39 forms a Glycyl lysine isopeptide (Lys-Gly) (interchain with G-Cter in ubiquitin) linkage. 2 positions are modified to phosphoserine: Ser48 and Ser50. A helical membrane pass occupies residues Ala98–Asn118. The Cytoplasmic segment spans residues Ala119–Ser225. A helical transmembrane segment spans residues Ile226–Pro246. Over Lys247–Asp271 the chain is Extracellular. A helical transmembrane segment spans residues Ala272–Leu292. The Cytoplasmic segment spans residues Gln293–Asp354. The helical transmembrane segment at Ile355–Ile375 threads the bilayer. The Extracellular portion of the chain corresponds to Gly376–Asp383. A helical membrane pass occupies residues Asn384 to Leu404. Topologically, residues Arg405–Thr465 are cytoplasmic. The chain crosses the membrane as a helical span at residues Pro466–Leu486. At Arg487–Gln493 the chain is on the extracellular side. A helical transmembrane segment spans residues Leu494–Ala514. The Cytoplasmic segment spans residues His515–Lys552.

It belongs to the FET4 family.

It localises to the membrane. In terms of biological role, required for Fe(2+) ion low affinity uptake. The chain is Low-affinity Fe(2+) transport protein (FET4) from Saccharomyces cerevisiae (strain ATCC 204508 / S288c) (Baker's yeast).